Reading from the N-terminus, the 448-residue chain is Phosphohexose mutases (448 aa).

The Phosphoserine intermediate role is filled by Ser97. Mg(2+) contacts are provided by Ser97, Asp237, Asp239, and Asp241.

Belongs to the phosphohexose mutase family. Requires Mg(2+) as cofactor.

The enzyme catalyses alpha-D-glucose 1-phosphate = alpha-D-glucose 6-phosphate. It catalyses the reaction alpha-D-mannose 1-phosphate = D-mannose 6-phosphate. It functions in the pathway nucleotide-sugar biosynthesis; GDP-alpha-D-mannose biosynthesis; alpha-D-mannose 1-phosphate from D-fructose 6-phosphate: step 2/2. In terms of biological role, involved in xanthan production. The polypeptide is Phosphohexose mutases (xanA) (Xanthomonas campestris pv. campestris (strain B100)).